Consider the following 168-residue polypeptide: Endoribonuclease YbeY (168 aa).

Zn(2+) contacts are provided by His-132, His-136, and His-142.

It belongs to the endoribonuclease YbeY family. Requires Zn(2+) as cofactor.

The protein localises to the cytoplasm. In terms of biological role, single strand-specific metallo-endoribonuclease involved in late-stage 70S ribosome quality control and in maturation of the 3' terminus of the 16S rRNA. The chain is Endoribonuclease YbeY from Clostridium perfringens (strain SM101 / Type A).